Consider the following 89-residue polypeptide: Insulin (89 aa).

3 disulfides stabilise this stretch: Cys7/Cys75, Cys19/Cys88, and Cys74/Cys79. The propeptide at 33–66 (DVGPLSAFRDLEPPLDTEMEDRFPYRQQLAGSKM) is c peptide.

Belongs to the insulin family. As to quaternary structure, heterodimer of a B chain and an A chain linked by two disulfide bonds.

It is found in the secreted. Functionally, insulin decreases blood glucose concentration. It increases cell permeability to monosaccharides, amino acids and fatty acids. It accelerates glycolysis, the pentose phosphate cycle, and glycogen synthesis in liver. This is Insulin (ins) from Callorhinchus milii (Ghost shark).